A 122-amino-acid polypeptide reads, in one-letter code: Glycine cleavage system H protein (122 aa).

The Lipoyl-binding domain occupies 19–101 (VATVGITDYA…QGKAWFFKIK (83 aa)). At Lys-60 the chain carries N6-lipoyllysine.

Belongs to the GcvH family. The glycine cleavage system is composed of four proteins: P, T, L and H. (R)-lipoate serves as cofactor.

Functionally, the glycine cleavage system catalyzes the degradation of glycine. The H protein shuttles the methylamine group of glycine from the P protein to the T protein. This Bradyrhizobium diazoefficiens (strain JCM 10833 / BCRC 13528 / IAM 13628 / NBRC 14792 / USDA 110) protein is Glycine cleavage system H protein.